The chain runs to 469 residues: Adenosylhomocysteinase (469 aa).

Residues threonine 63, aspartate 139, and glutamate 164 each coordinate substrate. 165 to 167 (TTT) contributes to the NAD(+) binding site. Lysine 194 and aspartate 198 together coordinate substrate. Residues asparagine 199, 228-233 (GYGDVG), glutamate 251, asparagine 300, 321-323 (IGH), and asparagine 375 each bind NAD(+).

Belongs to the adenosylhomocysteinase family. NAD(+) serves as cofactor.

The protein resides in the cytoplasm. The enzyme catalyses S-adenosyl-L-homocysteine + H2O = L-homocysteine + adenosine. The protein operates within amino-acid biosynthesis; L-homocysteine biosynthesis; L-homocysteine from S-adenosyl-L-homocysteine: step 1/1. Its function is as follows. May play a key role in the regulation of the intracellular concentration of adenosylhomocysteine. In Pseudomonas entomophila (strain L48), this protein is Adenosylhomocysteinase.